Here is a 120-residue protein sequence, read N- to C-terminus: Large ribosomal subunit protein uL14 (120 aa).

This sequence belongs to the universal ribosomal protein uL14 family. In terms of assembly, part of the 50S ribosomal subunit. Forms a cluster with proteins L3 and L19. In the 70S ribosome, L14 and L19 interact and together make contacts with the 16S rRNA in bridges B5 and B8.

Binds to 23S rRNA. Forms part of two intersubunit bridges in the 70S ribosome. The protein is Large ribosomal subunit protein uL14 of Karelsulcia muelleri (strain GWSS) (Sulcia muelleri).